The primary structure comprises 218 residues: Ropporin-1-like protein (218 aa).

The 30-residue stretch at 17-46 folds into the RIIa domain; the sequence is PELTDILKQFTKAAIRTQPADVLQWSAGYF.

It belongs to the ropporin family. As to quaternary structure, component of the axonemal radial spoke complex 1 (RS1), at least composed of spoke head proteins RSPH1, RSPH3, RSPH9 and the cilia-specific component RSPH4A or sperm-specific component RSPH6A, spoke stalk proteins RSPH14, DNAJB13, DYDC1, ROPN1L and NME5, and the anchor protein IQUB. May interact with AKAP3. Interacts with FSCB; the interaction increases upon spermatozoa capacitation conditions. Interacts with CFAP61. Post-translationally, sumoylated, sumoylation decreases upon spermatozoa capacitation conditions.

It localises to the cell projection. The protein resides in the cilium. It is found in the flagellum. Functions as part of axonemal radial spoke complexes that play an important part in the motility of sperm and cilia. Important for male fertility. With ROPN1, involved in fibrous sheath integrity and sperm motility, plays a role in PKA-dependent signaling processes required for spermatozoa capacitation. This Bos taurus (Bovine) protein is Ropporin-1-like protein (ROPN1L).